A 185-amino-acid polypeptide reads, in one-letter code: Elongation factor P (185 aa).

This sequence belongs to the elongation factor P family.

It localises to the cytoplasm. It functions in the pathway protein biosynthesis; polypeptide chain elongation. Its function is as follows. Involved in peptide bond synthesis. Stimulates efficient translation and peptide-bond synthesis on native or reconstituted 70S ribosomes in vitro. Probably functions indirectly by altering the affinity of the ribosome for aminoacyl-tRNA, thus increasing their reactivity as acceptors for peptidyl transferase. This is Elongation factor P from Paraburkholderia phytofirmans (strain DSM 17436 / LMG 22146 / PsJN) (Burkholderia phytofirmans).